The primary structure comprises 238 residues: Ubiquinone biosynthesis O-methyltransferase (238 aa).

S-adenosyl-L-methionine-binding residues include Arg-38, Gly-58, Asp-79, and Met-124.

The protein belongs to the methyltransferase superfamily. UbiG/COQ3 family.

It carries out the reaction a 3-demethylubiquinol + S-adenosyl-L-methionine = a ubiquinol + S-adenosyl-L-homocysteine + H(+). It catalyses the reaction a 3-(all-trans-polyprenyl)benzene-1,2-diol + S-adenosyl-L-methionine = a 2-methoxy-6-(all-trans-polyprenyl)phenol + S-adenosyl-L-homocysteine + H(+). The protein operates within cofactor biosynthesis; ubiquinone biosynthesis. Functionally, O-methyltransferase that catalyzes the 2 O-methylation steps in the ubiquinone biosynthetic pathway. In Acinetobacter baylyi (strain ATCC 33305 / BD413 / ADP1), this protein is Ubiquinone biosynthesis O-methyltransferase.